Here is a 111-residue protein sequence, read N- to C-terminus: Large ribosomal subunit protein uL22 (111 aa).

Belongs to the universal ribosomal protein uL22 family. Part of the 50S ribosomal subunit.

Functionally, this protein binds specifically to 23S rRNA; its binding is stimulated by other ribosomal proteins, e.g. L4, L17, and L20. It is important during the early stages of 50S assembly. It makes multiple contacts with different domains of the 23S rRNA in the assembled 50S subunit and ribosome. In terms of biological role, the globular domain of the protein is located near the polypeptide exit tunnel on the outside of the subunit, while an extended beta-hairpin is found that lines the wall of the exit tunnel in the center of the 70S ribosome. The polypeptide is Large ribosomal subunit protein uL22 (Xanthomonas oryzae pv. oryzae (strain PXO99A)).